A 304-amino-acid chain; its full sequence is Calcium release-activated calcium channel protein 1 (304 aa).

The span at 1-11 shows a compositional bias: pro residues; that stretch reads MHPEPAPPPSH. The interval 1 to 50 is disordered; the sequence is MHPEPAPPPSHSNPELPVSGGSSTSGSRRSRRRSGDGEPSGAPPLPPPPP. At 1-89 the chain is on the cytoplasmic side; the sequence is MHPEPAPPPS…KLYLSRAKLK (89 aa). The segment at 3–49 is required for generation of inwardly rectifying CRAC currents; the sequence is PEPAPPPSHSNPELPVSGGSSTSGSRRSRRRSGDGEPSGAPPLPPPP. Residues 12-27 show a composition bias toward low complexity; it reads SNPELPVSGGSSTSGS. Positions 39–61 are AKAP5 association region; sequence PSGAPPLPPPPPAVSYPDWIGQS. The segment covering 41 to 50 has biased composition (pro residues); the sequence is GAPPLPPPPP. The tract at residues 72-92 is interaction with STIM1; the sequence is SMQALSWRKLYLSRAKLKASS. A helical membrane pass occupies residues 90 to 107; the sequence is ASSRTSALLSGFAMVAMV. At 108–121 the chain is on the extracellular side; the sequence is EVQLDTDHDYPPGL. The helical transmembrane segment at 122-142 threads the bilayer; that stretch reads LIVFSACTTVLVAVHLFALMI. Residues 143–175 are Cytoplasmic-facing; sequence STCILPNIEAVSNVHNLNSVKESPHERMHRHIE. The chain crosses the membrane as a helical span at residues 176-196; it reads LAWAFSTVIGTLLFLAEVVLL. Residues 197 to 237 lie on the Extracellular side of the membrane; it reads CWVKFLPLKRQAGQPSPTKPPAESVIVANHSDSSGITPGEA. N-linked (GlcNAc...) asparagine glycosylation occurs at asparagine 225. Residues 238-258 traverse the membrane as a helical segment; the sequence is AAIASTAIMVPCGLVFIVFAV. Residues 259 to 304 lie on the Cytoplasmic side of the membrane; sequence HFYRSLVSHKTDRQFQELNELAEFARLQDQLDHRGDHSLTPGTHYA. Positions 275-295 are interaction with STIM1; that stretch reads ELNELAEFARLQDQLDHRGDH. Threonine 298 carries the post-translational modification Phosphothreonine.

This sequence belongs to the Orai family. As to quaternary structure, oligomerizes in homomeric and heteromeric ORAI complexes. Native CRAC channels most likely consist of hexameric ORAI heteromers, implying that diverse ORAI1, ORAI2 and ORAI3 subunit combinations with distinct biophysical properties can operate in a cell-type specific way. ARC channels are heteropentamers consisting of three ORAI1 and two ORAI3 subunits. Interacts with STIM1 and STIM2; this regulates channel activity. Interacts with CALM; this may displace STIM1 and STIM2 and might thereby modulate channel activity. Interacts (via N-terminus) with AKAP5 upon store depletion. Interacts with CRACR2A/EFCAB4B; the interaction is direct and takes place in absence of Ca(2+). Forms a complex with CRACR2A/EFCAB4B and STIM1 at low concentration of Ca(2+), the complex dissociates at elevated Ca(2+) concentrations. Interacts with ASPH (isoform 8). Interacts with SLC35G1. Interacts with UBQLN1. Interacts with ADCY8; interaction is calcium store depletion independent; interaction occurs in membrane raft; interaction increases markedly after store depletion; positively regulates SOCE-induced adenylate cyclase activity; contributes to the targeting of ADCY8 to discrete regions of the plasma membrane that are shielded from other calcium events. Interacts with EFHB; the interaction takes place upon Ca(2+)-store depletion. Interacts (via N- and C-termini) with ATP2C2 (via N-terminus); this interaction regulates Ca(2+) influx at the plasma membrane. Interacts with TSPAN18; this interaction regulates ORAI1 exit from the endoplasmic (ER), and/or Golgi, and trafficking to the cell surface. Post-translationally, N-glycosylated. N-glycosylation inhibits channel activity in T cells. Ubiquitinated. In terms of processing, cys-195 is oxidated, leading to inactivation of channel activity. As to expression, expressed in lactating mammary epithelium (at protein level).

Its subcellular location is the cell membrane. The protein localises to the basolateral cell membrane. It carries out the reaction Ca(2+)(in) = Ca(2+)(out). Oxidation at Cys-197 leads to inactivation of channel activity. Its function is as follows. Pore-forming subunit of two major inward rectifying Ca(2+) channels at the plasma membrane: Ca(2+) release-activated Ca(2+) (CRAC) channels and arachidonate-regulated Ca(2+)-selective (ARC) channels. Assembles with ORAI2 and ORAI3 to form hexameric CRAC channels that mediate Ca(2+) influx upon depletion of endoplasmic reticulum Ca(2+) store and channel activation by Ca(2+) sensor STIM1, a process known as store-operated Ca(2+) entry (SOCE). Various pore subunit combinations may account for distinct CRAC channel spatiotemporal and cell-type specific dynamics. ORAI1 mainly contributes to the generation of Ca(2+) plateaus involved in sustained Ca(2+) entry and is dispensable for cytosolic Ca(2+) oscillations, whereas ORAI2 and ORAI3 generate oscillatory patterns. CRAC channels assemble in Ca(2+) signaling microdomains where Ca(2+) influx is coupled to calmodulin and calcineurin signaling and activation of NFAT transcription factors recruited to ORAI1 via AKAP5. Activates NFATC2/NFAT1 and NFATC3/NFAT4-mediated transcriptional responses. CRAC channels are the main pathway for Ca(2+) influx in T cells and promote the immune response to pathogens by activating NFAT-dependent cytokine and chemokine transcription. Assembles with ORAI3 to form channels that mediate store-independent Ca(2+) influx in response to inflammatory metabolites arachidonate or its derivative leukotriene C4, termed ARC and LRC channels respectively. Plays a prominent role in Ca(2+) influx at the basolateral membrane of mammary epithelial cells independently of the Ca(2+) content of endoplasmic reticulum or Golgi stores. May mediate transepithelial transport of large quantities of Ca(2+) for milk secretion. The chain is Calcium release-activated calcium channel protein 1 (Orai1) from Mus musculus (Mouse).